Here is a 103-residue protein sequence, read N- to C-terminus: Large ribosomal subunit protein uL24 (103 aa).

This sequence belongs to the universal ribosomal protein uL24 family. Part of the 50S ribosomal subunit.

Functionally, one of two assembly initiator proteins, it binds directly to the 5'-end of the 23S rRNA, where it nucleates assembly of the 50S subunit. In terms of biological role, one of the proteins that surrounds the polypeptide exit tunnel on the outside of the subunit. This Roseobacter denitrificans (strain ATCC 33942 / OCh 114) (Erythrobacter sp. (strain OCh 114)) protein is Large ribosomal subunit protein uL24.